A 729-amino-acid chain; its full sequence is Glutamine synthetase (729 aa).

Residues 85-174 (THYTHWFQPL…IPTIFISYTG (90 aa)) form the GS beta-grasp domain. A GS catalytic domain is found at 179-615 (YKTPLLKALA…VLGDLAINHI (437 aa)). Mg(2+)-binding residues include E215, E217, E286, and E293. L-glutamate is bound by residues 337–338 (NG) and G338. A Mg(2+)-binding site is contributed by H342. Residues S346 and R458 each coordinate ATP. Residue R458 participates in L-glutamate binding.

It belongs to the glutamine synthetase family. In terms of assembly, homohexamer. Mg(2+) is required as a cofactor.

Its subcellular location is the cytoplasm. The enzyme catalyses L-glutamate + NH4(+) + ATP = L-glutamine + ADP + phosphate + H(+). Its activity is regulated as follows. Inhibited by L-histidine (46%), L-arginine (38%) and L-methionine-DL-sulphoximine. The activity of this enzyme is not controlled by adenylation. Functionally, catalyzes the ATP-dependent biosynthesis of glutamine from glutamate and ammonia. The sequence is that of Glutamine synthetase from Bacteroides fragilis (strain YCH46).